A 318-amino-acid chain; its full sequence is Dehydrogenase/reductase SDR family member 7C-B (318 aa).

The N-terminal stretch at 1 to 32 is a signal peptide; that stretch reads MGMSDIMWLDVSWAWLVLTAVLLAAAVFYLYT. An NAD(+)-binding site is contributed by 49–73; it reads LITDSLSTVGNECAKLFHAGGARLI. S186 is a binding site for substrate. Residue Y199 is the Proton acceptor of the active site.

It belongs to the short-chain dehydrogenases/reductases (SDR) family.

It localises to the secreted. Putative oxidoreductase. This Danio rerio (Zebrafish) protein is Dehydrogenase/reductase SDR family member 7C-B (dhrs7cb).